Consider the following 401-residue polypeptide: Putative TRAP transporter large permease protein HI_0050 (401 aa).

11 helical membrane passes run 31–51, 70–90, 115–135, 144–164, 193–213, 217–237, 253–273, 290–310, 330–350, 353–373, and 375–395; these read FPLM…HGGI, LGYV…SAVA, GLIC…PMII, ITKL…GLWV, AFWP…GIFT, AGVV…GLTF, MVMF…VAQI, ILMF…DLIP, IAYF…TPPV, VLYV…KGIA, and FLFV…IVIV.

This sequence belongs to the TRAP transporter large permease family.

It localises to the cell inner membrane. The sequence is that of Putative TRAP transporter large permease protein HI_0050 from Haemophilus influenzae (strain ATCC 51907 / DSM 11121 / KW20 / Rd).